A 445-amino-acid chain; its full sequence is Phosphoglucosamine mutase (445 aa).

The active-site Phosphoserine intermediate is the serine 102. The Mg(2+) site is built by serine 102, aspartate 241, aspartate 243, and aspartate 245. Phosphoserine is present on serine 102.

It belongs to the phosphohexose mutase family. Mg(2+) is required as a cofactor. Post-translationally, activated by phosphorylation.

The catalysed reaction is alpha-D-glucosamine 1-phosphate = D-glucosamine 6-phosphate. Its function is as follows. Catalyzes the conversion of glucosamine-6-phosphate to glucosamine-1-phosphate. The sequence is that of Phosphoglucosamine mutase from Novosphingobium aromaticivorans (strain ATCC 700278 / DSM 12444 / CCUG 56034 / CIP 105152 / NBRC 16084 / F199).